We begin with the raw amino-acid sequence, 121 residues long: Fluoride-specific ion channel FluC 1 (121 aa).

The next 4 membrane-spanning stretches (helical) occupy residues 3–23 (YLYIFVGGALGALIRFCLSML), 29–49 (IPLGTFVANLLGAFLMGSIGA), 67–87 (TGLLGALTTFSTFQFELVTLF), and 92–112 (FILFTIYGVTSYILGILSCYL). Na(+) is bound by residues G71 and T74.

The protein belongs to the fluoride channel Fluc/FEX (TC 1.A.43) family.

The protein localises to the cell membrane. It carries out the reaction fluoride(in) = fluoride(out). Its activity is regulated as follows. Na(+) is not transported, but it plays an essential structural role and its presence is essential for fluoride channel function. Its function is as follows. Fluoride-specific ion channel. Important for reducing fluoride concentration in the cell, thus reducing its toxicity. The sequence is that of Fluoride-specific ion channel FluC 1 from Staphylococcus epidermidis (strain ATCC 35984 / DSM 28319 / BCRC 17069 / CCUG 31568 / BM 3577 / RP62A).